A 161-amino-acid chain; its full sequence is Inner membrane assembly complex subunit 17 (161 aa).

Residues 1–22 constitute a mitochondrion transit peptide; that stretch reads MLNPRPCVPRLLSAVARCHKPY. Over 23–84 the chain is Mitochondrial matrix; that stretch reads STSIKSLEDL…QQQQQALKKF (62 aa). A helical membrane pass occupies residues 85–107; that stretch reads VRPMWIFLLMSSFFYLTGHYIWW. Residues 108 to 161 are Mitochondrial intermembrane-facing; sequence KLEYDEREIELHKQVQALRQELDSAIAAKHSGKEPALSGAGAKKPKRWYLAWLW. Positions 109-138 form a coiled coil; sequence LEYDEREIELHKQVQALRQELDSAIAAKHS.

This sequence belongs to the INA17 family. Component of the inner membrane assembly (INA) complex, composed of INA17 and INA22. Interacts with a subset of F(1)F(0)-ATP synthase subunits of the F(1)-domain and the peripheral stalk.

Its subcellular location is the mitochondrion inner membrane. Its function is as follows. Component of the INA complex (INAC) that promotes the biogenesis of mitochondrial F(1)F(0)-ATP synthase. INAC facilitates the assembly of the peripheral stalk and promotes the assembly of the catalytic F(1)-domain with the membrane-embedded F(0)-domain. In Lachancea thermotolerans (strain ATCC 56472 / CBS 6340 / NRRL Y-8284) (Yeast), this protein is Inner membrane assembly complex subunit 17.